A 110-amino-acid polypeptide reads, in one-letter code: ATP synthase epsilon chain (110 aa).

The protein belongs to the ATPase epsilon chain family. F-type ATPases have 2 components, CF(1) - the catalytic core - and CF(0) - the membrane proton channel. CF(1) has five subunits: alpha(3), beta(3), gamma(1), delta(1), epsilon(1). CF(0) has three main subunits: a, b and c.

The protein localises to the cell inner membrane. Produces ATP from ADP in the presence of a proton gradient across the membrane. The sequence is that of ATP synthase epsilon chain from Rickettsia typhi (strain ATCC VR-144 / Wilmington).